A 159-amino-acid polypeptide reads, in one-letter code: Keratin-associated protein 11-1 (159 aa).

Tandem repeats lie at residues 107-116, 117-126, 127-136, and 137-146. A 4 X 10 AA approximate repeats region spans residues 107 to 146; that stretch reads CQPLSGVSTVCKPVRSISTVCQPVGGVSTICQPTCGVSRT.

Belongs to the PMG family. In terms of tissue distribution, wool.

Functionally, in the wool cortex, wool keratin intermediate filaments are embedded in an interfilamentous matrix, consisting of wool keratin-associated proteins (KRTAP), which are essential for the formation of a rigid and resistant wool shaft through their extensive disulfide bond cross-linking with abundant cysteine residues of wool keratins. The matrix proteins include the high-sulfur and high-glycine-tyrosine keratins. The polypeptide is Keratin-associated protein 11-1 (KRTAP11-1) (Capra hircus (Goat)).